The chain runs to 125 residues: Small ribosomal subunit protein uS13 (125 aa).

The disordered stretch occupies residues 92-125; sequence RRSLPARGQRTRTNARTRKGKRKTVAGKKKAGKK.

This sequence belongs to the universal ribosomal protein uS13 family. As to quaternary structure, part of the 30S ribosomal subunit. Forms a loose heterodimer with protein S19. Forms two bridges to the 50S subunit in the 70S ribosome.

Located at the top of the head of the 30S subunit, it contacts several helices of the 16S rRNA. In the 70S ribosome it contacts the 23S rRNA (bridge B1a) and protein L5 of the 50S subunit (bridge B1b), connecting the 2 subunits; these bridges are implicated in subunit movement. Contacts the tRNAs in the A and P-sites. This is Small ribosomal subunit protein uS13 from Chlorobaculum parvum (strain DSM 263 / NCIMB 8327) (Chlorobium vibrioforme subsp. thiosulfatophilum).